Consider the following 240-residue polypeptide: Aquaporin Z (240 aa).

The next 2 helical transmembrane spans lie at 10–30 (MIGT…AAGF) and 35–55 (IGLV…AYAI). The short motif at 64–66 (NPA) is the NPA 1 element. A run of 3 helical transmembrane segments spans residues 90 to 110 (VLGA…AAGF), 131 to 151 (LVAC…VIMG), and 160 to 180 (GFAP…SIPV). The short motif at 186–188 (NPA) is the NPA 2 element. Residues 202–222 (IGQLWLFWVAPLLGGVLGGVI) traverse the membrane as a helical segment.

Belongs to the MIP/aquaporin (TC 1.A.8) family. Homotetramer.

The protein resides in the cell inner membrane. It carries out the reaction H2O(in) = H2O(out). Its function is as follows. Channel that permits osmotically driven movement of water in both directions. It is involved in the osmoregulation and in the maintenance of cell turgor during volume expansion in rapidly growing cells. It mediates rapid entry or exit of water in response to abrupt changes in osmolarity. The sequence is that of Aquaporin Z from Rhodopseudomonas palustris (strain ATCC BAA-98 / CGA009).